The primary structure comprises 147 residues: Large ribosomal subunit protein bL9 (147 aa).

The disordered stretch occupies residues 40–60; sequence TTGNLKQHEAHERKAAEEAKQ. Over residues 45–59 the composition is skewed to basic and acidic residues; it reads KQHEAHERKAAEEAK.

This sequence belongs to the bacterial ribosomal protein bL9 family.

Its function is as follows. Binds to the 23S rRNA. The sequence is that of Large ribosomal subunit protein bL9 from Exiguobacterium sibiricum (strain DSM 17290 / CCUG 55495 / CIP 109462 / JCM 13490 / 255-15).